Reading from the N-terminus, the 424-residue chain is UDP-N-acetylglucosamine 1-carboxyvinyltransferase (424 aa).

22-23 (KN) contributes to the phosphoenolpyruvate binding site. Arginine 96 is a binding site for UDP-N-acetyl-alpha-D-glucosamine. The active-site Proton donor is cysteine 120. Cysteine 120 is modified (2-(S-cysteinyl)pyruvic acid O-phosphothioketal). Residues 125 to 129 (RPVDQ), aspartate 312, and isoleucine 334 each bind UDP-N-acetyl-alpha-D-glucosamine.

This sequence belongs to the EPSP synthase family. MurA subfamily.

It is found in the cytoplasm. The enzyme catalyses phosphoenolpyruvate + UDP-N-acetyl-alpha-D-glucosamine = UDP-N-acetyl-3-O-(1-carboxyvinyl)-alpha-D-glucosamine + phosphate. It participates in cell wall biogenesis; peptidoglycan biosynthesis. Its function is as follows. Cell wall formation. Adds enolpyruvyl to UDP-N-acetylglucosamine. This Polynucleobacter necessarius subsp. necessarius (strain STIR1) protein is UDP-N-acetylglucosamine 1-carboxyvinyltransferase.